Consider the following 1323-residue polypeptide: PH domain leucine-rich repeat-containing protein phosphatase 2 (1323 aa).

The region spanning 150 to 248 is the PH domain; that stretch reads RILLSGIYNV…WQRQASKVVS (99 aa). LRR repeat units follow at residues 250-271, 273-296, 300-321, 323-344, 346-368, 369-390, 392-412, 416-439, 440-460, 461-480, 481-502, 503-524, 526-547, 549-570, 571-592, 595-616, 621-644, 645-666, 669-690, 692-713, 714-735, and 737-758; these read RISTVDLSCYSLEEVPEHLFYS, DITYLNLRHNFMQLERPGGLDTLY, QLKGLNLSHNKLGLFPILLCEI, TLTELNLSCNGFHDLPSQIGNL, NLQTLCLDGNFLTTLPEELGNLQ, QLSSLGISFNNFSQIPEVYEKL, MLDRVVMAGNCLEVLNLGVLN, HIKHVDLRMNHLKTMVIENLEGNK, HITHVDLRDNRLTDLDLSSLC, SLEQLHCGRNQLRELTLSGF, SLRTLYASSNRLTAVNVYPVPS, LLTFLDLSRNLLECVPDWACEA, KIEVLDVSYNLLTEVPVRILSS, SLRKLMLGHNHVQNLPTLVEHI, PLEVLDLQHNALTRLPDTLFSK, NLRYLNASANSLESLPSACTGE, MLQLLYLTNNLLTDQCIPVLVGHL, HLRILHLANNQLQTFPASKLNK, QLEELNLSGNKLKTIPTTIANC, RLHTLVAHSNNISIFPEILQLP, QIQFVDLSCNDLTEILIPEALP, and TLQDLDLTGNTNLVLEHKTLDI. One can recognise a PPM-type phosphatase domain in the interval 785–1033; it reads SHGLAEMAGQ…DNVGAMVVYL (249 aa). Mn(2+) contacts are provided by D820, G821, K985, and D1024. The tract at residues 1060–1157 is disordered; the sequence is TIKDAPKPAT…DSDDDQPVEG (98 aa). Positions 1071 to 1097 are enriched in low complexity; the sequence is SSSSGIASEFSSEMSTSEVSSEVGSTA. Residues 1122–1146 show a composition bias toward polar residues; the sequence is PTPTSGLFQRQPSSATFSSNQSDNG. A Phosphoserine modification is found at S1210. The segment at 1285–1323 is disordered; sequence HDLEEEVKEQMKQHQDSRLEPEPHEEDRTEPPEEFDTAL. The span at 1292-1315 shows a compositional bias: basic and acidic residues; that stretch reads KEQMKQHQDSRLEPEPHEEDRTEP.

In terms of assembly, interacts with AKT1, AKT3 and PRKCB isoform beta-II. Interacts with STK4, RPS6KB1, RAF1. Interacts with FKBP5; FKBP5 acts as a scaffold for PHLPP2 and Akt. Interacts with NHERF1; NHERF1 scaffolds a heterotrimeric complex with PTEN. It depends on Mn(2+) as a cofactor. As to expression, in colorectal cancer tissue, expression is highest in the surface epithelium of normal colonic mucosa adjacent to the cancer tissue but is largely excluded from the crypt bases. Expression is lost or significantly decreased in 80% of tested tumors (at protein level).

It is found in the cytoplasm. The protein localises to the membrane. The protein resides in the nucleus. The catalysed reaction is O-phospho-L-seryl-[protein] + H2O = L-seryl-[protein] + phosphate. It carries out the reaction O-phospho-L-threonyl-[protein] + H2O = L-threonyl-[protein] + phosphate. With respect to regulation, inhibited by AKT1, AKT2 and AKT3. Activated by oleic acid and arachidonic acid. Protein phosphatase involved in regulation of Akt and PKC signaling. Mediates dephosphorylation in the C-terminal domain hydrophobic motif of members of the AGC Ser/Thr protein kinase family; specifically acts on 'Ser-473' of AKT1, 'Ser-660' of PRKCB isoform beta-II and 'Ser-657' of PRKCA. Akt regulates the balance between cell survival and apoptosis through a cascade that primarily alters the function of transcription factors that regulate pro- and antiapoptotic genes. Dephosphorylation of 'Ser-473' of Akt triggers apoptosis and decreases cell proliferation. Also controls the phosphorylation of AKT3. Dephosphorylates STK4 on 'Thr-387' leading to STK4 activation and apoptosis. Dephosphorylates RPS6KB1 and is involved in regulation of cap-dependent translation. Inhibits cancer cell proliferation and may act as a tumor suppressor. Dephosphorylation of PRKCA and PRKCB leads to their destabilization and degradation. Dephosphorylates RAF1 inhibiting its kinase activity. The chain is PH domain leucine-rich repeat-containing protein phosphatase 2 (PHLPP2) from Homo sapiens (Human).